A 330-amino-acid polypeptide reads, in one-letter code: DNA-directed RNA polymerase subunit alpha (330 aa).

Residues 1–236 form an alpha N-terminal domain (alpha-NTD) region; that stretch reads MQGSVTEFLK…EQLDAFVDLR (236 aa). The alpha C-terminal domain (alpha-CTD) stretch occupies residues 250–330; that stretch reads FDPILLRPVD…NWPPASIAED (81 aa).

It belongs to the RNA polymerase alpha chain family. As to quaternary structure, homodimer. The RNAP catalytic core consists of 2 alpha, 1 beta, 1 beta' and 1 omega subunit. When a sigma factor is associated with the core the holoenzyme is formed, which can initiate transcription.

The catalysed reaction is RNA(n) + a ribonucleoside 5'-triphosphate = RNA(n+1) + diphosphate. In terms of biological role, DNA-dependent RNA polymerase catalyzes the transcription of DNA into RNA using the four ribonucleoside triphosphates as substrates. In Vibrio cholerae serotype O1 (strain ATCC 39315 / El Tor Inaba N16961), this protein is DNA-directed RNA polymerase subunit alpha.